A 1028-amino-acid chain; its full sequence is Golgin subfamily A member 2 (1028 aa).

The interval 1–112 (MADQNRQIKL…NRPLSSTESL (112 aa)) is disordered. The span at 40–60 (KGDQTDAPADRRSPENERVDV) shows a compositional bias: basic and acidic residues. A compositionally biased stretch (polar residues) spans 74–87 (NPASAINTDNSAPQ). Coiled-coil stretches lie at residues 162–200 (NTQL…EQGA), 233–388 (ARQK…YAVQ), 414–690 (RDST…LLNG), 738–769 (LSRV…LTAL), and 799–840 (HEAL…LSGE). A disordered region spans residues 259–280 (RTLSSVSTQQKQHERHNKELEK). Residues 756–791 (RRIHQDTRQQLTALSHDHHHHHHHEPHSTCAETDGS) are disordered. The disordered stretch occupies residues 944 to 981 (AMDVSSSPQSSTAEIQSQSSERPAADPISSPSLRPQED). Residues 945 to 964 (MDVSSSPQSSTAEIQSQSSE) are compositionally biased toward polar residues.

The protein belongs to the GOLGA2 family.

The protein resides in the golgi apparatus. It is found in the cis-Golgi network membrane. The protein localises to the endoplasmic reticulum-Golgi intermediate compartment membrane. Its subcellular location is the cytoplasm. It localises to the cytoskeleton. The protein resides in the spindle pole. Peripheral membrane component of the cis-Golgi stack that acts as a membrane skeleton that maintains the structure of the Golgi apparatus, and as a vesicle thether that facilitates vesicle fusion to the Golgi membrane. Required for normal protein transport from the endoplasmic reticulum to the Golgi apparatus and the cell membrane. Plays a central role in mitotic Golgi disassembly. Also plays a key role in spindle pole assembly and centrosome organization. It probably promotes mitotic spindle pole assembly by activating assembly factors to nucleate microtubules around the Golgi and capture them to couple mitotic membranes to the spindle. Also required for the Golgi ribbon formation and glycosylation of membrane and secretory proteins. The polypeptide is Golgin subfamily A member 2 (Danio rerio (Zebrafish)).